A 394-amino-acid polypeptide reads, in one-letter code: Protein arginine N-methyltransferase 8 (394 aa).

G2 carries the N-myristoyl glycine lipid modification. A disordered region spans residues 16–40 (MAENAAESTEVNSPPSQPPQPVVPA). 2 consecutive short sequence motifs (SH3-binding) follow at residues 29-42 (PPSQ…PAKP) and 53-58 (PSCPGR). Residues 30–39 (PSQPPQPVVP) show a composition bias toward pro residues. R58 carries the post-translational modification Omega-N-methylarginine; by autocatalysis. At R73 the chain carries Asymmetric dimethylarginine; by autocatalysis. The SAM-dependent MTase PRMT-type domain maps to 73-394 (RDYYFDSYAH…TSVSNDYKMR (322 aa)). Residues H86, R95, G119, 119-122 (GSGT), E141, and E170 each bind S-adenosyl-L-methionine. Residues E185 and E194 contribute to the active site.

This sequence belongs to the class I-like SAM-binding methyltransferase superfamily. Protein arginine N-methyltransferase family. PRMT8 subfamily. In terms of assembly, homodimer. Tetramer; individual homodimers associates to form a homotetramer. Homooctamer; individual homodimers associates to form a homooctamer and homooligomerization is required for proper localization to the cell membrane. Heterodimer with PRMT1; heterodimerization may recruit PRMT1 activity to the plasma membrane. Interacts with PRMT2 (via the SH3 domain). Interacts with FYN (via the SH3 domain). Interacts with EWS; independently of EWS methylation status. In terms of tissue distribution, brain-specific.

Its subcellular location is the cell membrane. It carries out the reaction L-arginyl-[protein] + S-adenosyl-L-methionine = N(omega)-methyl-L-arginyl-[protein] + S-adenosyl-L-homocysteine + H(+). The catalysed reaction is L-arginyl-[protein] + 2 S-adenosyl-L-methionine = N(omega),N(omega)-dimethyl-L-arginyl-[protein] + 2 S-adenosyl-L-homocysteine + 2 H(+). In terms of biological role, S-adenosyl-L-methionine-dependent and membrane-associated arginine methyltransferase that can both catalyze the formation of omega-N monomethylarginine (MMA) and asymmetrical dimethylarginine (aDMA) in proteins such as NIFK, myelin basic protein, histone H4, H2A and H2A/H2B dimer. Able to mono- and dimethylate EWS protein; however its precise role toward EWS remains unclear as it still interacts with fully methylated EWS. The chain is Protein arginine N-methyltransferase 8 from Homo sapiens (Human).